We begin with the raw amino-acid sequence, 117 residues long: Iron-sulfur cluster insertion protein ErpA (117 aa).

Iron-sulfur cluster-binding residues include Cys45, Cys109, and Cys111.

The protein belongs to the HesB/IscA family. Homodimer. Iron-sulfur cluster is required as a cofactor.

In terms of biological role, required for insertion of 4Fe-4S clusters for at least IspG. This chain is Iron-sulfur cluster insertion protein ErpA, found in Ruthia magnifica subsp. Calyptogena magnifica.